A 520-amino-acid chain; its full sequence is Laccase-1 (520 aa).

The signal sequence occupies residues 1 to 19; that stretch reads MRLSNALVLVAACISSVVA. 3 consecutive Plastocyanin-like domains span residues 21-145, 157-305, and 375-488; these read TRTF…FIVY, VDDE…LTLA, and TVPV…FAEA. Cu cation contacts are provided by His-82 and His-84. 2 cysteine pairs are disulfide-bonded: Cys-103/Cys-509 and Cys-135/Cys-229. An N-linked (GlcNAc...) asparagine glycan is attached at Asn-108. Cu cation is bound by residues His-127 and His-129. Residues Asn-239 and Asn-299 are each glycosylated (N-linked (GlcNAc...) asparagine). Residues His-417, His-420, His-422, His-470, Cys-471, His-472, and His-476 each contribute to the Cu cation site. Asn-492 carries an N-linked (GlcNAc...) asparagine glycan.

Belongs to the multicopper oxidase family. Requires Cu cation as cofactor.

The protein resides in the secreted. It catalyses the reaction 4 hydroquinone + O2 = 4 benzosemiquinone + 2 H2O. Lignin degradation and detoxification of lignin-derived products. This chain is Laccase-1 (lcc1), found in Agaricus bisporus (White button mushroom).